Consider the following 128-residue polypeptide: Large ribosomal subunit protein bL12 (128 aa).

Belongs to the bacterial ribosomal protein bL12 family. As to quaternary structure, homodimer. Part of the ribosomal stalk of the 50S ribosomal subunit. Forms a multimeric L10(L12)X complex, where L10 forms an elongated spine to which 2 to 4 L12 dimers bind in a sequential fashion. Binds GTP-bound translation factors.

Forms part of the ribosomal stalk which helps the ribosome interact with GTP-bound translation factors. Is thus essential for accurate translation. This chain is Large ribosomal subunit protein bL12, found in Desulfosudis oleivorans (strain DSM 6200 / JCM 39069 / Hxd3) (Desulfococcus oleovorans).